Reading from the N-terminus, the 225-residue chain is Membrane protein (225 aa).

Residues 1–20 (MPNETNCTLDFEQSVQLFKE) are Virion surface-facing. The helical transmembrane segment at 21-41 (YNLFITAFLLFLTIILQYGYA) threads the bilayer. At 42-51 (TRSKVIYTLK) the chain is on the intravirion side. Residues 52–72 (MIVLWCFWPLNIAVGVISCTY) traverse the membrane as a helical segment. Residues 73 to 77 (PPNTG) are Virion surface-facing. Residues 78 to 98 (GLVAAIILTVFACLSFVGYWI) traverse the membrane as a helical segment. Residues 99-225 (QSIRLFKRCR…VATGGSSLYT (127 aa)) lie on the Intravirion side of the membrane.

It belongs to the gammacoronaviruses M protein family. In terms of assembly, homomultimer. Interacts with envelope E protein in the budding compartment of the host cell, which is located between endoplasmic reticulum and the Golgi complex. Forms a complex with HE and S proteins. Interacts with nucleocapsid N protein. This interaction probably participates in RNA packaging into the virus.

Its subcellular location is the virion membrane. It localises to the host Golgi apparatus membrane. Functionally, component of the viral envelope that plays a central role in virus morphogenesis and assembly via its interactions with other viral proteins. The protein is Membrane protein of Avian infectious bronchitis virus (strain Beaudette) (IBV).